Consider the following 311-residue polypeptide: 4-diphosphocytidyl-2-C-methyl-D-erythritol kinase (311 aa).

Lys13 is a catalytic residue. Position 114 to 124 (114 to 124) interacts with ATP; sequence PVAGGMAGGSA. Asp156 is an active-site residue.

The protein belongs to the GHMP kinase family. IspE subfamily.

It carries out the reaction 4-CDP-2-C-methyl-D-erythritol + ATP = 4-CDP-2-C-methyl-D-erythritol 2-phosphate + ADP + H(+). It participates in isoprenoid biosynthesis; isopentenyl diphosphate biosynthesis via DXP pathway; isopentenyl diphosphate from 1-deoxy-D-xylulose 5-phosphate: step 3/6. In terms of biological role, catalyzes the phosphorylation of the position 2 hydroxy group of 4-diphosphocytidyl-2C-methyl-D-erythritol. The sequence is that of 4-diphosphocytidyl-2-C-methyl-D-erythritol kinase from Corynebacterium diphtheriae (strain ATCC 700971 / NCTC 13129 / Biotype gravis).